Here is a 200-residue protein sequence, read N- to C-terminus: MKLMDVHVLFSGGKDSSLSAVILKKLGYNPHLITINFGVIPSYKLAEETAKILGFKHKVITLDRKIVEKAADMIIEHKYPGPAIQYVHKTVLEILADEYSILADGTRRDDRVPKLSYSEIQSLEMRKNIQYITPLMGFGYKTLRHLASEFFILEEIKSGTKLSSDYEAEIRHILKERGESPEKYFPEHKQTRVVGLKKEI.

This is an uncharacterized protein from Methanocaldococcus jannaschii (strain ATCC 43067 / DSM 2661 / JAL-1 / JCM 10045 / NBRC 100440) (Methanococcus jannaschii).